Here is a 965-residue protein sequence, read N- to C-terminus: MDFKENSIYINVMDKIYAREKEVLSQNQDFQENNLSRISLILNYEDFSLKFDESLHGYSFGYVTNPFGLKLHSPFTETVRFDGAEKYIYMKRILGVPSNETQLCNYQHQNFEEKDSQKELLPSPQQLTPPTSLPSLPLLPLPQAPEQNEEQQLTQPPSPPSIPPPPPQKKQIQIFITPSGIVSQKIQNFFRDTQIKSTDPVNCSLDHSIKKNYSLEEIYENNKNYMDKNNNFLHFLFTFIDKITIKDLDHFEKEINRVHNIKKLINQQNMKGETPLHSLIINNSESCLKKLVIAKINHMGIFDYSKCDNLNKNLLAHAIEKGDIDVIRLVLIGGCPLKMSPRSKLFKKNFKIYRQQIYRVFEIKEFLTKIGFNQYIPMFLEFEFKNININYLIESFKFKLNINEDEILLWKLLTEPYKNLDFKSFCSEYQIKHQNDLISETMANHFINVCQLNPHFGYIDFHTQIGSAGNASVFEGTYKGIPIACKEMPVSGTYEQSVDSIKEIAAVGQIKKLGCATVVETIGVLKYNQKLFLVMVKEKCNLLSFLCNKSEILKMQREGIWTSIFKISKDILKGLVSLREAGMYHRDFKTANFLVSNTGKILISDFGTSRDENEKRLNTFAKTIGTMWYRCPRLGDCSEDEKTLTHYNEKSEIYSLGIILWELVCVAMTGTYISPKIPLFQNEVDFLIWIHKDYRFSFPVGTPQSFVKLITRMCLPFRDRRPTVRQVLDNVKAIKKEFLSNRGIEGEQTYSGLECWREFNFSKQNVTRISISNLHNTEYKVVNKYDYASYNNKNSLLMKRYLDNSNFVVELINPNGLFRFKSFFEKEKLLYLKLKSTYKDEYYFDMSQFLTTIIQIHQITVIYYKMLQKYRELRLLRNNNNINKNKNNNNNNNNNNNNNNNINNNNTFNNSTNNNSNDNINIPYDFNNNNNNNNNSCNNSKKFKSISESTSALGLEASSSSSSSS.

The disordered stretch occupies residues 114–170 (KDSQKELLPSPQQLTPPTSLPSLPLLPLPQAPEQNEEQQLTQPPSPPSIPPPPPQKK). 2 stretches are compositionally biased toward low complexity: residues 119-136 (ELLP…LPSL) and 144-155 (APEQNEEQQLTQ). The span at 156–168 (PPSPPSIPPPPPQ) shows a compositional bias: pro residues. ANK repeat units follow at residues 271 to 301 (KGET…HMGI) and 310 to 339 (LNKN…PLKM). In terms of domain architecture, Protein kinase spans 459-739 (IDFHTQIGSA…NVKAIKKEFL (281 aa)). ATP is bound by residues 465–473 (IGSAGNASV) and Lys-486. The Proton acceptor role is filled by Asp-587. The helical transmembrane segment at 653–673 (IYSLGIILWELVCVAMTGTYI) threads the bilayer. Asn-760, Asn-765, Asn-905, Asn-909, Asn-910, Asn-914, Asn-934, and Asn-938 each carry an N-linked (GlcNAc...) asparagine glycan. The segment covering 881–940 (NINKNKNNNNNNNNNNNNNNNINNNNTFNNSTNNNSNDNINIPYDFNNNNNNNNNSCNNS) has biased composition (low complexity). Residues 881 to 942 (NINKNKNNNN…NNNSCNNSKK (62 aa)) form a disordered region.

It belongs to the protein kinase superfamily. Ser/Thr protein kinase family.

The protein localises to the membrane. The enzyme catalyses L-seryl-[protein] + ATP = O-phospho-L-seryl-[protein] + ADP + H(+). It carries out the reaction L-threonyl-[protein] + ATP = O-phospho-L-threonyl-[protein] + ADP + H(+). The polypeptide is Probable serine/threonine-protein kinase DDB_G0291516 (Dictyostelium discoideum (Social amoeba)).